Here is a 69-residue protein sequence, read N- to C-terminus: Chondroitin proteoglycan 9 (69 aa).

The signal sequence occupies residues 1–19 (MHLWQLVLLVILFFGAAFG). O-linked (Xyl...) (chondroitin sulfate) serine glycosylation is found at Ser-25 and Ser-27.

This Caenorhabditis elegans protein is Chondroitin proteoglycan 9.